A 199-amino-acid polypeptide reads, in one-letter code: Dephospho-CoA kinase (199 aa).

The DPCK domain maps to 3–199 (ILGLTGSIGM…ATAKMPQRRA (197 aa)). An ATP-binding site is contributed by 11-16 (GMGKST).

The protein belongs to the CoaE family.

Its subcellular location is the cytoplasm. The enzyme catalyses 3'-dephospho-CoA + ATP = ADP + CoA + H(+). The protein operates within cofactor biosynthesis; coenzyme A biosynthesis; CoA from (R)-pantothenate: step 5/5. Functionally, catalyzes the phosphorylation of the 3'-hydroxyl group of dephosphocoenzyme A to form coenzyme A. This Rhodopseudomonas palustris (strain BisB18) protein is Dephospho-CoA kinase.